Consider the following 151-residue polypeptide: uncharacterized protein (151 aa).

The interval 1 to 48 (MRMAPTESTEGRRLWPGPREGGSGKETTSEKLSNLPRPHSYSPKRADA) is disordered.

This is an uncharacterized protein from Homo sapiens (Human).